The chain runs to 455 residues: Chromosomal replication initiator protein DnaA (455 aa).

Residues 1–70 (MTNETWVQVR…RMRLTEAGSP (70 aa)) form a domain I, interacts with DnaA modulators region. Residues 70–113 (PVERLEFAVSNTPRAPLKEVKAAAPAASPARARPAPPEEDLRGA) are domain II. The segment at 87–109 (KEVKAAAPAASPARARPAPPEED) is disordered. Residues 91–102 (AAAPAASPARAR) show a composition bias toward low complexity. Residues 114-335 (PLDARFTFDS…GALTRLFAFA (222 aa)) form a domain III, AAA+ region region. ATP-binding residues include G158, G160, K161, and T162. A domain IV, binds dsDNA region spans residues 336 to 455 (SLVGREITLD…LQLLRRLLQA (120 aa)).

It belongs to the DnaA family. Oligomerizes as a right-handed, spiral filament on DNA at oriC.

The protein localises to the cytoplasm. In terms of biological role, plays an essential role in the initiation and regulation of chromosomal replication. ATP-DnaA binds to the origin of replication (oriC) to initiate formation of the DNA replication initiation complex once per cell cycle. Binds the DnaA box (a 9 base pair repeat at the origin) and separates the double-stranded (ds)DNA. Forms a right-handed helical filament on oriC DNA; dsDNA binds to the exterior of the filament while single-stranded (ss)DNA is stabiized in the filament's interior. The ATP-DnaA-oriC complex binds and stabilizes one strand of the AT-rich DNA unwinding element (DUE), permitting loading of DNA polymerase. After initiation quickly degrades to an ADP-DnaA complex that is not apt for DNA replication. Binds acidic phospholipids. The polypeptide is Chromosomal replication initiator protein DnaA (Cereibacter sphaeroides (strain ATCC 17029 / ATH 2.4.9) (Rhodobacter sphaeroides)).